A 103-amino-acid chain; its full sequence is MAVKERVGTVVSDKMEKTVVVAVESRFPHPIYQKTVSRTTRYKAHDEDNSCRVGDRVRITETRPMSRHKRWAIAEVLSHSPKADKSAGSTAPAPEAAAKEVSE.

The segment at 78–103 is disordered; that stretch reads SHSPKADKSAGSTAPAPEAAAKEVSE.

It belongs to the universal ribosomal protein uS17 family. In terms of assembly, part of the 30S ribosomal subunit.

One of the primary rRNA binding proteins, it binds specifically to the 5'-end of 16S ribosomal RNA. The sequence is that of Small ribosomal subunit protein uS17 from Parasynechococcus marenigrum (strain WH8102).